We begin with the raw amino-acid sequence, 334 residues long: UPF0104 membrane protein MTH_378 (334 aa).

A run of 8 helical transmembrane segments spans residues 7–27 (FYFFALSILLILALIIWMGPS), 33–53 (VYMADWMIIAIALLIHMGVLA), 120–140 (FFDLGIGGGLLLLAAVMVPVI), 142–162 (VIALFGAILSVLITYLIYLVN), 218–238 (VIFILSLLSWLMECLRLYLVF), 247–267 (FSAVIIIFLLANLVGILSALP), 277–297 (MAGLFVVFGVPGFLAGSIALV), and 300–320 (IISFWMVTALGAIFSSCYAGE).

The protein belongs to the UPF0104 family.

The protein resides in the cell membrane. The chain is UPF0104 membrane protein MTH_378 from Methanothermobacter thermautotrophicus (strain ATCC 29096 / DSM 1053 / JCM 10044 / NBRC 100330 / Delta H) (Methanobacterium thermoautotrophicum).